Reading from the N-terminus, the 163-residue chain is MASTFSFDIVSDFDWQELVNAVDQTGREIKARYDLKDTQTALELTKEGLTIHTDSEFTLNSVQTILQQKAAKRQLSLKIFDYGPVEAAGGQRVKQLIKLRRGIPSELAKEISKLIRNEFKKVQASIQGDVVRVSAKSKDDLQAVIQRLKTQDYPVPLQFTNYR.

Belongs to the YajQ family.

Functionally, nucleotide-binding protein. The protein is Nucleotide-binding protein tll0793 of Thermosynechococcus vestitus (strain NIES-2133 / IAM M-273 / BP-1).